A 553-amino-acid polypeptide reads, in one-letter code: Putative transport protein Ent638_0015 (553 aa).

Helical transmembrane passes span 4–24, 28–48, 65–85, 95–115, and 158–178; these read IALT…IGNI, GVGL…HFAE, FGLI…FFAS, LFAL…HKLF, and MSYA…MWLV. 2 consecutive RCK C-terminal domains span residues 191–276 and 279–361; these read KKHE…VIGQ and ETSL…MVGN. The next 6 helical transmembrane spans lie at 371–391, 403–425, 439–459, 464–484, 493–513, and 533–553; these read MLPV…PLYV, AGGP…LYWF, IVLF…DTLA, ISWI…IGIL, YLTL…LAFA, and LVMF…WGMG.

It belongs to the AAE transporter (TC 2.A.81) family. YidE subfamily.

Its subcellular location is the cell membrane. The polypeptide is Putative transport protein Ent638_0015 (Enterobacter sp. (strain 638)).